Reading from the N-terminus, the 581-residue chain is Invertase (581 aa).

The N-terminal stretch at Met-1–Ala-22 is a signal peptide. Asn-37, Asn-40, Asn-46, Asn-57, Asn-62, and Asn-79 each carry an N-linked (GlcNAc...) asparagine glycan. Residues Phe-94 to Asp-97, Gln-113, and Phe-158 to Ser-159 contribute to the substrate site. Asp-97 is a catalytic residue. N-linked (GlcNAc...) asparagine glycans are attached at residues Asn-168 and Asn-175. Residues Arg-227–Asp-228 and Glu-280 contribute to the substrate site. Residue Asn-322 is glycosylated (N-linked (GlcNAc...) asparagine). Trp-366 serves as a coordination point for substrate. N-linked (GlcNAc...) asparagine glycosylation is found at Asn-399, Asn-409, Asn-425, Asn-446, Asn-452, Asn-519, and Asn-569.

Belongs to the glycosyl hydrolase 32 family. Post-translationally, glycosylated; contains 67% carbohydrates. This is composed of equimolar amounts of mannose and galactose. There is also a small amount of glucosamine present.

The enzyme catalyses Hydrolysis of terminal non-reducing beta-D-fructofuranoside residues in beta-D-fructofuranosides.. In Schizosaccharomyces pombe (strain 972 / ATCC 24843) (Fission yeast), this protein is Invertase (inv1).